Consider the following 1016-residue polypeptide: Calmodulin-binding transcription activator 4 (1016 aa).

The CG-1 DNA-binding region spans 38–164; it reads ISTLYQEAHS…YRDVSEREEG (127 aa). The segment at 324–343 is disordered; it reads KNGSGPSGGTGGSGDQGSES. Over residues 328 to 338 the composition is skewed to gly residues; that stretch reads GPSGGTGGSGD. 3 ANK repeats span residues 647–676, 680–709, and 719–748; these read QEQGIIHMVAGLGFEWAFYPILAHGVNVDF, KGWSALHWAAQFGSEKMVAALIASGASAGA, and NGKTAASIAASNGHKGLAGYLSEVALTNHL. The segment at 753-786 is disordered; sequence LEETENSKDTAQVQTEKTLNSISEQSPSGNEDQV. Residues 761-785 show a composition bias toward polar residues; the sequence is DTAQVQTEKTLNSISEQSPSGNEDQ. IQ domains are found at residues 798-827, 855-884, and 878-907; these read AAQAAARIQAAFRAHSFRKRKQREAALVAC, YNSAALSIQKNFRGYKDRKCFLELRQKVVK, and LRQKVVKIQAHVRGYQIRKNYKVICWAVRI. A calmodulin-binding region spans residues 903–925; that stretch reads WAVRILDKVVLRWRRKGVGLRGF. Ser-935 and Ser-962 each carry phosphoserine.

The protein belongs to the CAMTA family. In terms of tissue distribution, expressed in roots, stems, leaves, flowers and siliques.

It localises to the nucleus. Transcription activator that binds to the DNA consensus sequence 5'-[ACG]CGCG[GTC]-3'. Regulates transcriptional activity in response to calcium signals. Binds calmodulin in a calcium-dependent manner. Involved together with CAMTA2 and CAMTA3 in the positive regulation of a general stress response. The protein is Calmodulin-binding transcription activator 4 of Arabidopsis thaliana (Mouse-ear cress).